The sequence spans 314 residues: Pseudouridine-5'-phosphate glycosidase (314 aa).

The active-site Proton donor is the E30. K91 and V111 together coordinate substrate. D143 contributes to the Mn(2+) binding site. 145–147 (SAD) serves as a coordination point for substrate. The active-site Nucleophile is K164.

It belongs to the pseudouridine-5'-phosphate glycosidase family. As to quaternary structure, homotrimer. Requires Mn(2+) as cofactor.

It catalyses the reaction D-ribose 5-phosphate + uracil = psi-UMP + H2O. Catalyzes the reversible cleavage of pseudouridine 5'-phosphate (PsiMP) to ribose 5-phosphate and uracil. Functions biologically in the cleavage direction, as part of a pseudouridine degradation pathway. The protein is Pseudouridine-5'-phosphate glycosidase of Cupriavidus pinatubonensis (strain JMP 134 / LMG 1197) (Cupriavidus necator (strain JMP 134)).